We begin with the raw amino-acid sequence, 153 residues long: Mitochondrial fission 1 protein (153 aa).

The Cytoplasmic portion of the chain corresponds to 1 to 124 (MTQLPYAVDA…LIDDKVTKEG (124 aa)). The TPR repeat unit spans residues 73–106 (RECLYYLALGNYKLGNYAQARKYNDALLENEPAN). The helical transmembrane segment at 125–145 (LMGVAIISGVAVAAGVIGGVL) threads the bilayer. Topologically, residues 146 to 153 (LRNLGRKR) are mitochondrial intermembrane.

Belongs to the FIS1 family.

The protein resides in the mitochondrion outer membrane. Functionally, has a role in mitochondrial fission. Has a role in outer membrane fission but not matrix separation. The protein is Mitochondrial fission 1 protein (mtp-2) of Neurospora crassa (strain ATCC 24698 / 74-OR23-1A / CBS 708.71 / DSM 1257 / FGSC 987).